A 39-amino-acid polypeptide reads, in one-letter code: MSEGGKIPLWIVAVVAGMGVIAVVGIFFYGAYAGVGSAV.

The chain crosses the membrane as a helical span at residues 7–27 (IPLWIVAVVAGMGVIAVVGIF).

Belongs to the PsbJ family. In terms of assembly, PSII is composed of 1 copy each of membrane proteins PsbA, PsbB, PsbC, PsbD, PsbE, PsbF, PsbH, PsbI, PsbJ, PsbK, PsbL, PsbM, PsbT, PsbX, PsbY, PsbZ, Psb30/Ycf12, peripheral proteins PsbO, CyanoQ (PsbQ), PsbU, PsbV and a large number of cofactors. It forms dimeric complexes.

It is found in the cellular thylakoid membrane. Functionally, this protein is a component of the reaction center of photosystem II. In terms of biological role, one of the components of the core complex of photosystem II (PSII). PSII is a light-driven water:plastoquinone oxidoreductase that uses light energy to abstract electrons from H(2)O, generating O(2) and a proton gradient subsequently used for ATP formation. It consists of a core antenna complex that captures photons, and an electron transfer chain that converts photonic excitation into a charge separation. This Picosynechococcus sp. (strain ATCC 27264 / PCC 7002 / PR-6) (Agmenellum quadruplicatum) protein is Photosystem II reaction center protein J.